The sequence spans 89 residues: Small ribosomal subunit protein uS15 (89 aa).

It belongs to the universal ribosomal protein uS15 family. Part of the 30S ribosomal subunit. Forms a bridge to the 50S subunit in the 70S ribosome, contacting the 23S rRNA.

One of the primary rRNA binding proteins, it binds directly to 16S rRNA where it helps nucleate assembly of the platform of the 30S subunit by binding and bridging several RNA helices of the 16S rRNA. In terms of biological role, forms an intersubunit bridge (bridge B4) with the 23S rRNA of the 50S subunit in the ribosome. This is Small ribosomal subunit protein uS15 from Pseudomonas aeruginosa (strain LESB58).